The primary structure comprises 91 residues: MKPMYRSRSWRRKYVRTPGGRVVIHFERRKPKIAHCAICGRPLNGIPRGRPVEMRKLPKTKKRPERPYPHLCPKCMRRVMKEQVRAQIMKG.

A disordered region spans residues 48–71 (RGRPVEMRKLPKTKKRPERPYPHL).

It belongs to the eukaryotic ribosomal protein eL34 family.

The chain is Large ribosomal subunit protein eL34 (rpl34e) from Pyrococcus abyssi (strain GE5 / Orsay).